We begin with the raw amino-acid sequence, 556 residues long: Formate--tetrahydrofolate ligase (556 aa).

ATP is bound at residue 65–72 (TPAGEGKT).

Belongs to the formate--tetrahydrofolate ligase family.

It carries out the reaction (6S)-5,6,7,8-tetrahydrofolate + formate + ATP = (6R)-10-formyltetrahydrofolate + ADP + phosphate. It functions in the pathway one-carbon metabolism; tetrahydrofolate interconversion. This chain is Formate--tetrahydrofolate ligase, found in Alkaliphilus oremlandii (strain OhILAs) (Clostridium oremlandii (strain OhILAs)).